Reading from the N-terminus, the 175-residue chain is MNLDFIKDRIVAVPDFPKPGIVFRDITPLLADPQGLKMTAKAMAEELKSKGIKPTVIAGTESRGFIFGVALAEVLGLGFVPVRKPGKLPRETYKVSYQLEYGSDSLEIHKDAFKPTDKVLVVDDLLATGGTAKATVQLIEKTQASVAGLIFVIELEDLNGRKVLEGHNVSALVKY.

The protein belongs to the purine/pyrimidine phosphoribosyltransferase family. As to quaternary structure, homodimer.

It is found in the cytoplasm. The enzyme catalyses AMP + diphosphate = 5-phospho-alpha-D-ribose 1-diphosphate + adenine. It participates in purine metabolism; AMP biosynthesis via salvage pathway; AMP from adenine: step 1/1. Functionally, catalyzes a salvage reaction resulting in the formation of AMP, that is energically less costly than de novo synthesis. The polypeptide is Adenine phosphoribosyltransferase (Francisella philomiragia subsp. philomiragia (strain ATCC 25017 / CCUG 19701 / FSC 153 / O#319-036)).